We begin with the raw amino-acid sequence, 314 residues long: Ribosomal RNA small subunit methyltransferase H (314 aa).

S-adenosyl-L-methionine contacts are provided by residues 35 to 37, Asp55, Phe79, Asp101, and Gln108; that span reads GGH. Positions 276 to 296 are disordered; it reads QGGQTLKPVGKKLMPSEAEVA.

It belongs to the methyltransferase superfamily. RsmH family.

It localises to the cytoplasm. It carries out the reaction cytidine(1402) in 16S rRNA + S-adenosyl-L-methionine = N(4)-methylcytidine(1402) in 16S rRNA + S-adenosyl-L-homocysteine + H(+). Specifically methylates the N4 position of cytidine in position 1402 (C1402) of 16S rRNA. In Pectobacterium atrosepticum (strain SCRI 1043 / ATCC BAA-672) (Erwinia carotovora subsp. atroseptica), this protein is Ribosomal RNA small subunit methyltransferase H.